The primary structure comprises 365 residues: Peptide chain release factor 2 (365 aa).

Glutamine 252 is modified (N5-methylglutamine).

It belongs to the prokaryotic/mitochondrial release factor family. Methylated by PrmC. Methylation increases the termination efficiency of RF2.

It localises to the cytoplasm. Its function is as follows. Peptide chain release factor 2 directs the termination of translation in response to the peptide chain termination codons UGA and UAA. This chain is Peptide chain release factor 2, found in Shewanella woodyi (strain ATCC 51908 / MS32).